We begin with the raw amino-acid sequence, 535 residues long: Probable inorganic phosphate transporter 1-7 (535 aa).

The Cytoplasmic segment spans residues M1 to A24. A helical membrane pass occupies residues I25–V45. The Extracellular segment spans residues T46–S70. The chain crosses the membrane as a helical span at residues A71–L91. At G92–K99 the chain is on the cytoplasmic side. Residues V100–G120 form a helical membrane-spanning segment. Residues S121–C131 are Extracellular-facing. The chain crosses the membrane as a helical span at residues F132–M152. At S153 to R161 the chain is on the cytoplasmic side. Residues G162–F182 form a helical membrane-spanning segment. Topologically, residues A183 to A211 are extracellular. A helical transmembrane segment spans residues D212–S232. Residues R233–R289 are Cytoplasmic-facing. Residues H290–S310 form a helical membrane-spanning segment. The Extracellular portion of the chain corresponds to Q311 to T345. Residues L346–I366 traverse the membrane as a helical segment. Residues G367 to R368 are Cytoplasmic-facing. The helical transmembrane segment at F369–P389 threads the bilayer. Topologically, residues Y390 to R399 are extracellular. A helical membrane pass occupies residues I400–T420. Residues T421–H438 lie on the Cytoplasmic side of the membrane. A helical membrane pass occupies residues G439 to L459. The Extracellular segment spans residues A460–N480. The helical transmembrane segment at S481–E501 threads the bilayer. Over S502–A535 the chain is Cytoplasmic. The segment at S506–A535 is disordered. Low complexity predominate over residues E519–A535. Position 520 is a phosphoserine (S520).

This sequence belongs to the major facilitator superfamily. Phosphate:H(+) symporter (TC 2.A.1.9) family. In terms of tissue distribution, mature pollen.

It is found in the membrane. High-affinity transporter for external inorganic phosphate. This Arabidopsis thaliana (Mouse-ear cress) protein is Probable inorganic phosphate transporter 1-7 (PHT1-7).